A 265-amino-acid polypeptide reads, in one-letter code: Lipopolysaccharide core heptose(I) kinase WaaP (265 aa).

The active site involves D162.

This sequence belongs to the protein kinase superfamily. KdkA/RfaP family. Requires Mg(2+) as cofactor.

The protein localises to the cell inner membrane. The enzyme catalyses an L-alpha-D-Hep-(1-&gt;3)-L-alpha-D-Hep-(1-&gt;5)-[alpha-Kdo-(2-&gt;4)]-alpha-Kdo-(2-&gt;6)-lipid A + ATP = an L-alpha-D-Hep-(1-&gt;3)-4-O-phospho-L-alpha-D-Hep-(1-&gt;5)-[alpha-Kdo-(2-&gt;4)]-alpha-Kdo-(2-&gt;6)-lipid A + ADP + H(+). It catalyses the reaction L-alpha-D-Hep-(1-&gt;3)-L-alpha-D-Hep-(1-&gt;5)-[alpha-Kdo-(2-&gt;4)]-alpha-Kdo-(2-&gt;6)-lipid A (E. coli) + ATP = L-alpha-D-Hep-(1-&gt;3)-4-O-phospho-L-alpha-D-Hep-(1-&gt;5)-[alpha-Kdo-(2-&gt;4)]-alpha-Kdo-(2-&gt;6)-lipid A (E. coli) + ADP + H(+). It functions in the pathway bacterial outer membrane biogenesis; LPS core biosynthesis. In terms of biological role, kinase involved in the biosynthesis of the core oligosaccharide region of lipopolysaccharide (LPS). Catalyzes the phosphorylation of heptose I (HepI), the first heptose added to the Kdo2-lipid A module. The sequence is that of Lipopolysaccharide core heptose(I) kinase WaaP from Escherichia coli.